The following is a 322-amino-acid chain: Ferredoxin--NADP reductase (322 aa).

S14, D33, Q41, Y46, A86, F120, D278, and S319 together coordinate FAD.

It belongs to the ferredoxin--NADP reductase type 2 family. In terms of assembly, homodimer. The cofactor is FAD.

It catalyses the reaction 2 reduced [2Fe-2S]-[ferredoxin] + NADP(+) + H(+) = 2 oxidized [2Fe-2S]-[ferredoxin] + NADPH. The polypeptide is Ferredoxin--NADP reductase (Salinispora arenicola (strain CNS-205)).